The chain runs to 652 residues: Acetyl-coenzyme A synthetase (652 aa).

CoA contacts are provided by residues R189–K192 and T311. ATP contacts are provided by residues G387–P389, D411–T416, D500, and R515. A CoA-binding site is contributed by S523. R526 lines the ATP pocket. Mg(2+) contacts are provided by H539 and V542. CoA is bound at residue R584. An N6-acetyllysine modification is found at K609.

This sequence belongs to the ATP-dependent AMP-binding enzyme family. The cofactor is Mg(2+). In terms of processing, acetylated. Deacetylation by the SIR2-homolog deacetylase activates the enzyme.

The enzyme catalyses acetate + ATP + CoA = acetyl-CoA + AMP + diphosphate. In terms of biological role, catalyzes the conversion of acetate into acetyl-CoA (AcCoA), an essential intermediate at the junction of anabolic and catabolic pathways. AcsA undergoes a two-step reaction. In the first half reaction, AcsA combines acetate with ATP to form acetyl-adenylate (AcAMP) intermediate. In the second half reaction, it can then transfer the acetyl group from AcAMP to the sulfhydryl group of CoA, forming the product AcCoA. The protein is Acetyl-coenzyme A synthetase of Bartonella bacilliformis (strain ATCC 35685 / KC583 / Herrer 020/F12,63).